The chain runs to 312 residues: Malate dehydrogenase (312 aa).

Residues 12 to 17 (GAGFTG) and Asp-36 each bind NAD(+). Substrate contacts are provided by Arg-87 and Arg-93. Residues Asn-100 and 123 to 125 (LTN) contribute to the NAD(+) site. Asn-125 provides a ligand contact to substrate. Position 149 is a phosphoserine (Ser-149). Arg-156 is a binding site for substrate. His-180 functions as the Proton acceptor in the catalytic mechanism.

Belongs to the LDH/MDH superfamily. MDH type 3 family.

The catalysed reaction is (S)-malate + NAD(+) = oxaloacetate + NADH + H(+). Its function is as follows. Catalyzes the reversible oxidation of malate to oxaloacetate. This chain is Malate dehydrogenase, found in Bacillus anthracis (strain A0248).